The sequence spans 686 residues: Lysophospholipase 3 (686 aa).

Positions 1–26 (MIRPLCSKIIISYIFAISQFLLAANA) are cleaved as a signal peptide. The PLA2c domain maps to 39–592 (SCPDDINLVR…KNYCWNGTLD (554 aa)). 14 N-linked (GlcNAc...) asparagine glycosylation sites follow: N56, N82, N129, N166, N221, N283, N313, N351, N495, N519, N547, N571, N588, and N614. N659 carries GPI-anchor amidated asparagine lipidation. Positions 660–686 (SGSHLSGISVKFSAMIMLTLLMFTGAV) are cleaved as a propeptide — removed in mature form.

The protein belongs to the lysophospholipase family.

It localises to the cell membrane. The enzyme catalyses a 1-acyl-sn-glycero-3-phosphocholine + H2O = sn-glycerol 3-phosphocholine + a fatty acid + H(+). Sequentially removes both fatty acyl groups from diacylglycerophospholipids and therefore has both phospholipase A and lysophospholipase activities. Substrate preference is phosphatidylserine &gt; phosphatidylinositol. Does not cleave phosphatidylcholine, phosphatidylethanolamine, phosphatidic acid and phosphatidylinositol-bisphosphate. Mainly responsible for the degradation of phosphatidylinositol in vivo. The protein is Lysophospholipase 3 (PLB3) of Saccharomyces cerevisiae (strain ATCC 204508 / S288c) (Baker's yeast).